Reading from the N-terminus, the 770-residue chain is Amyloid-beta precursor protein (770 aa).

The first 17 residues, 1 to 17, serve as a signal peptide directing secretion; the sequence is MLPGLALLLLAAWTARA. The Extracellular segment spans residues 18–701; it reads LEVPTDGNAG…AEDVGSNKGA (684 aa). The GFLD subdomain stretch occupies residues 28 to 123; that stretch reads LLAEPQIAMF…PYRCLVGEFV (96 aa). An E1 domain is found at 28–189; sequence LLAEPQIAMF…RGVEFVCCPL (162 aa). Cystine bridges form between Cys38–Cys62, Cys73–Cys117, Cys98–Cys105, Cys133–Cys187, Cys144–Cys174, and Cys158–Cys186. A heparin-binding site is contributed by 96-110; sequence NWCKRGRKQCKTHPH. The interval 131 to 189 is cuBD subdomain; it reads DKCKFLHQERMDVCETHLHWHTVAKETCSEKSTNLHDYGMLLPCGIDKFRGVEFVCCPL. Residues His147, His151, and Tyr168 each coordinate Cu(2+). Residues 181–188 form a zinc-binding region; that stretch reads GVEFVCCP. Positions 183, 186, and 187 each coordinate Zn(2+). Acidic residues predominate over residues 194 to 207; it reads DNVDSADAEEDDSD. The interval 194 to 284 is disordered; it reads DNVDSADAEE…TTTTTTESVE (91 aa). Residue Ser198 is modified to Phosphoserine; by CK2. Ser206 carries the phosphoserine; by CK1 modification. 2 positions are modified to sulfotyrosine: Tyr217 and Tyr262. Acidic residues predominate over residues 228–264; sequence VAEEEEVAEVEEEEADDDEDDEDGDEVEEEAEEPYEE. Over residues 268–281 the composition is skewed to low complexity; it reads RTTSIATTTTTTTE. Disulfide bonds link Cys291–Cys341, Cys300–Cys324, and Cys316–Cys337. The BPTI/Kunitz inhibitor domain occupies 291–341; sequence CSEQAETGPCRAMISRWYFDVTEGKCAPFFYGGCGGNRNNFDTEEYCMAVC. Tyr336 is subject to Sulfotyrosine. The OX-2 motif lies at 344-365; that stretch reads VMSQSLRKTTREPLTRDPVKLP. In terms of domain architecture, E2 spans 374–565; that stretch reads AVDKYLETPG…EEIQDEVDEL (192 aa). The tract at residues 391–423 is heparin-binding; the sequence is FQKAKERLEAKHRERMSQVMREWEEAERQAKNL. Ser441 bears the Phosphoserine mark. The tract at residues 491–522 is heparin-binding; it reads FNMLKKYVRAEQKDRQHTLKHFEHVRMVDPKK. Position 497 is a phosphotyrosine (Tyr497). Residues 523–540 form a collagen-binding region; it reads AAQIRSQVMTHLRVIYER. 2 N-linked (GlcNAc...) asparagine glycosylation sites follow: Asn542 and Asn571. Residues His677, Tyr681, His684, and His685 each contribute to the Cu(2+) site. Positions 677, 681, 684, and 685 each coordinate Zn(2+). Residues 695–722 are interaction with PSEN1; sequence VGSNKGAIIGLMVGGVVIATVIVITLVM. The chain crosses the membrane as a helical span at residues 702–722; the sequence is IIGLMVGGVVIATVIVITLVM. Residues 723–770 are Cytoplasmic-facing; that stretch reads LKKKQYTSIHHGVVEVDAAVTPEERHLSKMQQNGYENPTYKFFEQMQN. Positions 724 to 734 match the Basolateral sorting signal motif; that stretch reads KKKQYTSIHHG. The residue at position 729 (Thr729) is a Phosphothreonine. Ser730 is modified (phosphoserine; by APP-kinase I). Positions 732–751 are interaction with G(o)-alpha; sequence HHGVVEVDAAVTPEERHLSK. Thr743 is subject to Phosphothreonine; by CDK5 and MAPK10. The interval 756–770 is required for the interaction with KIF5B and for anterograde transport in axons; it reads GYENPTYKFFEQMQN. Residue Tyr757 is modified to Phosphotyrosine; by ABL1. Residues 757 to 762 carry the YENPXY motif; contains endocytosis signal motif; that stretch reads YENPTY. A Glycyl lysine isopeptide (Lys-Gly) (interchain with G-Cter in ubiquitin) cross-link involves residue Lys763.

This sequence belongs to the APP family. In terms of assembly, binds, via its C-terminus, to the PID domain of several cytoplasmic proteins, including APBB family members, the APBA family, MAPK8IP1, SHC1 and NUMB and DAB1. Binding to DAB1 inhibits its serine phosphorylation. Interacts (via NPXY motif) with DAB2 (via PID domain); the interaction is impaired by tyrosine phosphorylation of the NPXY motif. Also interacts with GPCR-like protein BPP, APPBP1, IB1, KNS2 (via its TPR domains), APPBP2 (via BaSS) and DDB1. In vitro, it binds MAPT via the MT-binding domains. Associates with microtubules in the presence of ATP and in a kinesin-dependent manner. Interacts, through a C-terminal domain, with GNAO1. Amyloid-beta protein 42 binds CHRNA7 in hippocampal neurons. Amyloid-beta associates with HADH2. Interacts with CPEB1, ANKS1B and AGER. Interacts with ITM2B. Interacts with ITM2C. Interacts with IDE. Can form homodimers; dimerization is enhanced in the presence of Cu(2+) ions. Can form homodimers; this is promoted by heparin binding. Amyloid-beta protein 40 interacts with S100A9. CTF-alpha product of APP interacts with GSAP. Isoform APP695 interacts with SORL1 (via N-terminal ectodomain); this interaction retains APP in the trans-Golgi network and reduces processing into soluble APP-alpha and amyloid-beta peptides. Isoform APP770 interacts with SORL1. The C99 fragment also interacts with SORL1. Interacts with PLD3. Interacts with VDAC1. Interacts with NSG1; could regulate APP processing. Amyloid-beta protein 42 interacts with FPR2. Interacts (via transmembrane region) with PSEN1; the interaction is direct. Interacts with LRRK2. Interacts (via cytoplasmic domain) with KIF5B. Interacts (via C-terminus) with APBB2/FE65L1 (via C-terminus). Interacts (via intracellular domain) with APBB3. In terms of processing, proteolytically processed under normal cellular conditions. Cleavage either by alpha-secretase, beta-secretase or theta-secretase leads to generation and extracellular release of soluble APP peptides, S-APP-alpha and S-APP-beta, and the retention of corresponding membrane-anchored C-terminal fragments, C80, C83 and C99. Subsequent processing of C80 and C83 by gamma-secretase yields P3 peptides. This is the major secretory pathway and is non-amyloidogenic. Alternatively, presenilin/nicastrin-mediated gamma-secretase processing of C99 releases the amyloid-beta proteins, amyloid-beta protein 40 and amyloid-beta protein 42, major components of amyloid plaques, and the cytotoxic C-terminal fragments, gamma-CTF(50), gamma-CTF(57) and gamma-CTF(59). PSEN1 cleavage is more efficient with C83 than with C99 as substrate (in vitro). Amyloid-beta protein 40 and Amyloid-beta protein 42 are cleaved by ACE. Many other minor amyloid-beta peptides, amyloid-beta 1-X peptides, are found in cerebral spinal fluid (CSF) including the amyloid-beta X-15 peptides, produced from the cleavage by alpha-secretase. Proteolytically cleaved by caspases during neuronal apoptosis. Cleavage at Asp-739 by either caspase-3, -8 or -9 results in the production of the neurotoxic C31 peptide and the increased production of amyloid-beta peptides. Post-translationally, N- and O-glycosylated. In terms of processing, phosphorylation in the C-terminal on tyrosine, threonine and serine residues is neuron-specific. Phosphorylation can affect APP processing, neuronal differentiation and interaction with other proteins. Phosphorylated on Thr-743 in neuronal cells by Cdc5 kinase and Mapk10, in dividing cells by Cdc2 kinase in a cell-cycle dependent manner with maximal levels at the G2/M phase and, in vitro, by GSK-3-beta. The Thr-743 phosphorylated form causes a conformational change which reduces binding of Fe65 family members. In dopaminergic (DA) neurons, phosphorylation on Thr-743 by LRKK2 promotes the production and the nuclear translocation of the APP intracellular domain (AICD) which induces DA neuron apoptosis. Phosphorylation on Tyr-757 is required for SHC binding. Phosphorylated in the extracellular domain by casein kinases on both soluble and membrane-bound APP. This phosphorylation is inhibited by heparin. Trophic-factor deprivation triggers the cleavage of surface APP by beta-secretase to release sAPP-beta which is further cleaved to release an N-terminal fragment of APP (N-APP). Post-translationally, amyloid-beta peptides are degraded by IDE. In terms of processing, sulfated on tyrosine residues.

The protein resides in the cell membrane. The protein localises to the membrane. It is found in the perikaryon. It localises to the cell projection. Its subcellular location is the growth cone. The protein resides in the clathrin-coated pit. The protein localises to the early endosome. It is found in the cytoplasmic vesicle. It localises to the endoplasmic reticulum. Its subcellular location is the golgi apparatus. The protein resides in the secreted. The protein localises to the cell surface. It is found in the nucleus. It localises to the cytoplasm. Functions as a cell surface receptor and performs physiological functions on the surface of neurons relevant to neurite growth, neuronal adhesion and axonogenesis. Interaction between APP molecules on neighboring cells promotes synaptogenesis. Involved in cell mobility and transcription regulation through protein-protein interactions. Can promote transcription activation through binding to APBB1-KAT5 and inhibit Notch signaling through interaction with Numb. Couples to apoptosis-inducing pathways such as those mediated by G(o) and JIP. Inhibits G(o)-alpha ATPase activity. Acts as a kinesin I membrane receptor, mediating the axonal transport of beta-secretase and presenilin 1. By acting as a kinesin I membrane receptor, plays a role in axonal anterograde transport of cargo towards synapses in axons. May be involved in copper homeostasis/oxidative stress through copper ion reduction. In vitro, copper-metallated APP induces neuronal death directly or is potentiated through Cu(2+)-mediated low-density lipoprotein oxidation. Can regulate neurite outgrowth through binding to components of the extracellular matrix such as heparin and collagen I and IV. Induces a AGER-dependent pathway that involves activation of p38 MAPK, resulting in internalization of amyloid-beta peptide and mitochondrial dysfunction in cultured cortical neurons. Provides Cu(2+) ions for GPC1 which are required for release of nitric oxide (NO) and subsequent degradation of the heparan sulfate chains on GPC1. Its function is as follows. Amyloid-beta peptides are lipophilic metal chelators with metal-reducing activity. Binds transient metals such as copper, zinc and iron. In terms of biological role, the gamma-CTF peptides as well as the caspase-cleaved peptides, including C31, are potent enhancers of neuronal apoptosis. This Macaca fascicularis (Crab-eating macaque) protein is Amyloid-beta precursor protein.